Reading from the N-terminus, the 490-residue chain is Cytochrome P450 2C12, female-specific (490 aa).

C435 serves as a coordination point for heme.

The protein belongs to the cytochrome P450 family. Heme is required as a cofactor.

It is found in the endoplasmic reticulum membrane. Its subcellular location is the microsome membrane. It catalyses the reaction an organic molecule + reduced [NADPH--hemoprotein reductase] + O2 = an alcohol + oxidized [NADPH--hemoprotein reductase] + H2O + H(+). In terms of biological role, this P450 is active in 15-beta-hydroxylation of steroid sulfates. The chain is Cytochrome P450 2C12, female-specific (Cyp2c12) from Rattus norvegicus (Rat).